Reading from the N-terminus, the 216-residue chain is Octanoyltransferase (216 aa).

In terms of domain architecture, BPL/LPL catalytic spans 32–207; it reads PDSQDEIWLV…QLVKHLDYAE (176 aa). Substrate contacts are provided by residues 71–78, 138–140, and 151–153; these read RGGQVTYH, SLG, and GLA. The active-site Acyl-thioester intermediate is Cys-169.

The protein belongs to the LipB family.

The protein localises to the cytoplasm. The catalysed reaction is octanoyl-[ACP] + L-lysyl-[protein] = N(6)-octanoyl-L-lysyl-[protein] + holo-[ACP] + H(+). It functions in the pathway protein modification; protein lipoylation via endogenous pathway; protein N(6)-(lipoyl)lysine from octanoyl-[acyl-carrier-protein]: step 1/2. Its function is as follows. Catalyzes the transfer of endogenously produced octanoic acid from octanoyl-acyl-carrier-protein onto the lipoyl domains of lipoate-dependent enzymes. Lipoyl-ACP can also act as a substrate although octanoyl-ACP is likely to be the physiological substrate. This chain is Octanoyltransferase, found in Pseudomonas putida (strain ATCC 47054 / DSM 6125 / CFBP 8728 / NCIMB 11950 / KT2440).